The sequence spans 629 residues: tRNA uridine 5-carboxymethylaminomethyl modification enzyme MnmG (629 aa).

An FAD-binding site is contributed by 13-18 (GGGHAG). 273-287 (GPRYCPSIEDKIHRF) is a binding site for NAD(+).

This sequence belongs to the MnmG family. As to quaternary structure, homodimer. Heterotetramer of two MnmE and two MnmG subunits. FAD is required as a cofactor.

It localises to the cytoplasm. Functionally, NAD-binding protein involved in the addition of a carboxymethylaminomethyl (cmnm) group at the wobble position (U34) of certain tRNAs, forming tRNA-cmnm(5)s(2)U34. This is tRNA uridine 5-carboxymethylaminomethyl modification enzyme MnmG from Shewanella denitrificans (strain OS217 / ATCC BAA-1090 / DSM 15013).